Here is a 298-residue protein sequence, read N- to C-terminus: Possible hemolysin C (298 aa).

2 CBS domains span residues 80 to 141 (MVPR…QNGC) and 145 to 202 (LIRK…IDDE).

The protein belongs to the UPF0053 family. Hemolysin C subfamily.

The sequence is that of Possible hemolysin C (tlyC) from Rickettsia canadensis (strain McKiel).